The chain runs to 519 residues: Cytochrome P450 52E2 (519 aa).

A run of 2 helical transmembrane segments spans residues 10-30 (MLGG…FYFI) and 44-64 (PIFF…NAWF). Cysteine 461 lines the heme pocket.

The protein belongs to the cytochrome P450 family. It depends on heme as a cofactor.

The protein localises to the membrane. Together with an NADPH cytochrome P450 the enzyme system catalyzes the terminal hydroxylation as the first step in the assimilation of alkanes and fatty acids. This is Cytochrome P450 52E2 (CYP52E2) from Candida apicola (Yeast).